We begin with the raw amino-acid sequence, 108 residues long: Ig kappa chain V-V region HP 123E6 (108 aa).

Residues 1-23 (DIQMTQSTSSLSASLGDRVTISC) form a framework-1 region. A disulfide bridge connects residues cysteine 23 and cysteine 88. Residues 24–34 (RASQDISNYLN) are complementarity-determining-1. Residues 35 to 49 (WYQQKPDGTVKLLIY) form a framework-2 region. Residues 50 to 56 (YTSRLHS) are complementarity-determining-2. Residues 57–88 (GVPSRFSGSGSGTDYSLTISNLEQEDIATYFC) are framework-3. The segment at 89–97 (QQGYMLPRT) is complementarity-determining-3. The framework-4 stretch occupies residues 98 to 108 (FGGGTKLEIKR).

This is Ig kappa chain V-V region HP 123E6 from Mus musculus (Mouse).